Consider the following 1365-residue polypeptide: Histone-lysine N-methyltransferase NSD2 (1365 aa).

A phosphothreonine mark is found at threonine 110 and threonine 114. A Phosphoserine modification is found at serine 121. The segment at 149–169 (ADVSQSEENEQKSDNKTRRNR) is disordered. Serine 172 carries the post-translational modification Phosphoserine. Positions 222 to 286 (VGDLVWSKVS…FEKSLVAFEG (65 aa)) constitute a PWWP 1 domain. Disordered stretches follow at residues 373-455 (MVDS…RKGD), 513-567 (QSEE…DKTA), and 594-658 (CKPL…SKKS). The residue at position 376 (serine 376) is a Phosphoserine. Phosphothreonine is present on threonine 422. The HMG box DNA-binding region spans 453 to 521 (KGDSAAQFLV…AQSEEDSGNG (69 aa)). Residues 552–567 (DKHSLRKRETITDKTA) show a composition bias toward basic and acidic residues. Polar residues predominate over residues 603–623 (ASATASSALGFNKSSSPSASL). Over residues 632-648 (PGDEPSESPYESADETQ) the composition is skewed to acidic residues. 3 PHD-type zinc fingers span residues 667 to 713 (EYVC…CASG), 714 to 770 (IHSC…CHAS), and 831 to 875 (VSWC…CRAG). The 63-residue stretch at 880 to 942 (FQDIIWVKLG…QARVFPYMEG (63 aa)) folds into the PWWP 2 domain. The region spanning 1011-1061 (SEIPKCNCKPTDENPCGSDSECLNRMLMFECHPQVCPAGEYCQNQCFTKRQ) is the AWS domain. Zn(2+) contacts are provided by cysteine 1016, cysteine 1018, cysteine 1026, cysteine 1032, cysteine 1041, cysteine 1046, and cysteine 1052. An SET domain is found at 1063–1180 (PETKIIKTDG…AGTELTFNYN (118 aa)). S-adenosyl-L-methionine contacts are provided by residues tryptophan 1075, 1115–1118 (THFY), and 1141–1142 (NH). Position 1144 (cysteine 1144) interacts with Zn(2+). S-adenosyl-L-methionine is bound at residue asparagine 1186. A Post-SET domain is found at 1187–1203 (EKTVCRCGASNCSGFLG). Position 1191 (cysteine 1191) interacts with Zn(2+). Arginine 1192 lines the S-adenosyl-L-methionine pocket. Zn(2+) contacts are provided by cysteine 1193 and cysteine 1198. Residues 1206–1232 (PKTSASLSSEEKGKKAKKKTRRRRAKG) are disordered. Residues 1219 to 1230 (KKAKKKTRRRRA) show a composition bias toward basic residues. The segment at 1239 to 1286 (EDECFRCGDGGQLVLCDRKFCTKAYHLSCLGLGKRPFGKWECPWHHCD) adopts a PHD-type 4; atypical zinc-finger fold. The interval 1329–1365 (RADSSSSTKTEKPFPESLKSKGKRKKRRCWRRVTDGK) is disordered. Over residues 1348-1359 (SKGKRKKRRCWR) the composition is skewed to basic residues.

It belongs to the class V-like SAM-binding methyltransferase superfamily. Histone-lysine methyltransferase family. SET2 subfamily. As to quaternary structure, interacts with HDAC1. Interacts (via PHD-type zinc fingers 1, 2 and 3) with SALL1. Interacts (via PHD-type 1, 2 and 3) with SALL4. Interacts with NANOG. Interacts with OGT. Interacts (via HMG box) with NKX2-5. During B-cell development, expressed in early B2 cell progenitors (pre- and pro-B cells) with a decrease in expression at later stages.

The protein localises to the nucleus. It localises to the chromosome. It catalyses the reaction L-lysyl(36)-[histone H3] + S-adenosyl-L-methionine = N(6)-methyl-L-lysyl(36)-[histone H3] + S-adenosyl-L-homocysteine + H(+). It carries out the reaction L-lysyl(36)-[histone H3] + 2 S-adenosyl-L-methionine = N(6),N(6)-dimethyl-L-lysyl(36)-[histone H3] + 2 S-adenosyl-L-homocysteine + 2 H(+). Histone methyltransferase which specifically dimethylates nucleosomal histone H3 at 'Lys-36' (H3K36me2). Also monomethylates nucleosomal histone H3 at 'Lys-36' (H3K36me) in vitro. Does not trimethylate nucleosomal histone H3 at 'Lys-36' (H3K36me3). However, specifically trimethylates histone H3 at 'Lys-36' (H3K36me3) at euchromatic regions in embryonic stem (ES) cells. By methylating histone H3 at 'Lys-36', involved in the regulation of gene transcription during various biological processes. In ES cells, associates with developmental transcription factors such as SALL1 and represses inappropriate gene transcription mediated by histone deacetylation. During heart development, associates with transcription factor NKX2-5 to repress transcription of NKX2-5 target genes. Plays an essential role in adipogenesis, by regulating expression of genes involved in pre-adipocyte differentiation. During T-cell receptor (TCR) and CD28-mediated T-cell activation, promotes the transcription of transcription factor BCL6 which is required for follicular helper T (Tfh) cell differentiation. During B-cell development, required for the generation of the B1 lineage. During B2 cell activation, may contribute to the control of isotype class switch recombination (CRS), splenic germinal center formation, and the humoral immune response. Plays a role in class switch recombination of the immunoglobulin heavy chain (IgH) locus during B-cell activation. By regulating the methylation of histone H3 at 'Lys-36' and histone H4 at 'Lys-20' at the IgH locus, involved in TP53BP1 recruitment to the IgH switch region and promotes the transcription of IgA. In terms of biological role, histone methyltransferase which specifically dimethylates nucleosomal histone H3 at 'Lys-36' (H3K36me2). Mono-, di- and tri-methylates histone H3 at 'Lys-27' (H3K27me, H3K27me2, H3K27me3). Methylation of histone H3 at 'Lys-27' is controversial. May act as a transcription regulator that binds DNA and suppresses IL5 transcription through HDAC recruitment. This Mus musculus (Mouse) protein is Histone-lysine N-methyltransferase NSD2 (Nsd2).